A 754-amino-acid polypeptide reads, in one-letter code: tRNA(Met) cytidine acetyltransferase TmcA (754 aa).

Residues 181–202 (GISFDAAPPRVPTEKDRRSPRR) are disordered. Residues 192–202 (PTEKDRRSPRR) are compositionally biased toward basic and acidic residues. ATP contacts are provided by residues Gln-212, 236–245 (GRGKSSAAGL), and Arg-383. The region spanning 418 to 603 (VSYRALSPDD…YSALMTRPLS (186 aa)) is the N-acetyltransferase domain. Acetyl-CoA contacts are provided by residues 529–531 (IAT), 536–542 (RSSGLGS), and Glu-568.

It belongs to the RNA cytidine acetyltransferase family. TmcA subfamily.

Its subcellular location is the cytoplasm. The enzyme catalyses cytidine(34) in elongator tRNA(Met) + acetyl-CoA + ATP + H2O = N(4)-acetylcytidine(34) in elongator tRNA(Met) + ADP + phosphate + CoA + H(+). In terms of biological role, catalyzes the formation of N(4)-acetylcytidine (ac(4)C) at the wobble position of tRNA(Met), by using acetyl-CoA as an acetyl donor and ATP (or GTP). This Haloferax volcanii (strain ATCC 29605 / DSM 3757 / JCM 8879 / NBRC 14742 / NCIMB 2012 / VKM B-1768 / DS2) (Halobacterium volcanii) protein is tRNA(Met) cytidine acetyltransferase TmcA.